Reading from the N-terminus, the 175-residue chain is NADH-ubiquinone oxidoreductase chain 6 (175 aa).

5 helical membrane-spanning segments follow: residues 1–21, 25–45, 47–67, 88–108, and 149–169; these read MMTY…VSFS, SPIY…GIVL, FGGS…MLVV, AVLA…CYIL, and YGTW…LVIM.

Belongs to the complex I subunit 6 family. In terms of assembly, core subunit of respiratory chain NADH dehydrogenase (Complex I) which is composed of 45 different subunits.

The protein localises to the mitochondrion inner membrane. It catalyses the reaction a ubiquinone + NADH + 5 H(+)(in) = a ubiquinol + NAD(+) + 4 H(+)(out). In terms of biological role, core subunit of the mitochondrial membrane respiratory chain NADH dehydrogenase (Complex I) which catalyzes electron transfer from NADH through the respiratory chain, using ubiquinone as an electron acceptor. Essential for the catalytic activity and assembly of complex I. This Felis catus (Cat) protein is NADH-ubiquinone oxidoreductase chain 6 (MT-ND6).